The following is a 251-amino-acid chain: Octanoyltransferase (251 aa).

Positions 29-251 (AATPNSLWIC…GQKLSSYLAP (223 aa)) constitute a BPL/LPL catalytic domain. 68–75 (RGGQVTYH) is a substrate binding site. Positions 137-174 (ARLRPSPQPSPKGRGSSTPVLLPPLPGEGGGGGGPDPD) are disordered. Substrate is bound by residues 184 to 186 (ALG) and 197 to 199 (GVA). Residue C215 is the Acyl-thioester intermediate of the active site.

It belongs to the LipB family.

The protein localises to the cytoplasm. The enzyme catalyses octanoyl-[ACP] + L-lysyl-[protein] = N(6)-octanoyl-L-lysyl-[protein] + holo-[ACP] + H(+). Its pathway is protein modification; protein lipoylation via endogenous pathway; protein N(6)-(lipoyl)lysine from octanoyl-[acyl-carrier-protein]: step 1/2. Functionally, catalyzes the transfer of endogenously produced octanoic acid from octanoyl-acyl-carrier-protein onto the lipoyl domains of lipoate-dependent enzymes. Lipoyl-ACP can also act as a substrate although octanoyl-ACP is likely to be the physiological substrate. The sequence is that of Octanoyltransferase from Polaromonas sp. (strain JS666 / ATCC BAA-500).